Consider the following 634-residue polypeptide: Chaperone protein HtpG (634 aa).

An a; substrate-binding region spans residues 1–342; the sequence is MSVETQKETL…SNDLSLNVSR (342 aa). The tract at residues 343–559 is b; sequence EILQKDPVID…EQDLGLQMRQ (217 aa). The segment at 560-634 is c; sequence ILEASGQKVP…LNKLLVELSA (75 aa).

The protein belongs to the heat shock protein 90 family. Homodimer.

Its subcellular location is the cytoplasm. Its function is as follows. Molecular chaperone. Has ATPase activity. The sequence is that of Chaperone protein HtpG from Ectopseudomonas mendocina (strain ymp) (Pseudomonas mendocina).